Reading from the N-terminus, the 268-residue chain is Leucyl/phenylalanyl-tRNA--protein transferase (268 aa).

Belongs to the L/F-transferase family.

It localises to the cytoplasm. It catalyses the reaction N-terminal L-lysyl-[protein] + L-leucyl-tRNA(Leu) = N-terminal L-leucyl-L-lysyl-[protein] + tRNA(Leu) + H(+). The catalysed reaction is N-terminal L-arginyl-[protein] + L-leucyl-tRNA(Leu) = N-terminal L-leucyl-L-arginyl-[protein] + tRNA(Leu) + H(+). The enzyme catalyses L-phenylalanyl-tRNA(Phe) + an N-terminal L-alpha-aminoacyl-[protein] = an N-terminal L-phenylalanyl-L-alpha-aminoacyl-[protein] + tRNA(Phe). Its function is as follows. Functions in the N-end rule pathway of protein degradation where it conjugates Leu, Phe and, less efficiently, Met from aminoacyl-tRNAs to the N-termini of proteins containing an N-terminal arginine or lysine. This is Leucyl/phenylalanyl-tRNA--protein transferase from Zymomonas mobilis subsp. mobilis (strain ATCC 31821 / ZM4 / CP4).